Consider the following 528-residue polypeptide: MSMKWTSALLLIQLSCYLSSGNCGKVLVWPTEFSHWMNIKTILDELVQRGHEVTVLAYSPSILPGPNNPSALKFEICPTSLTETEFEDSVTQLVKRWSDIPKDTFWPHFLQVQEMMWTYGDMIRKFCKDVVSNKKLMKKLQESRFDVVLADAISPCGELLAELLKIPFVYSLRFSPGYAIEKHGGGFLFPPSYVPVVMSEFSDQMTFMERVKNMIYMVYFDFWFQAWDTKKWDQFYSEVLGRPTTLFETMAKAEIWLIRNYWDFQFPHPLLPHVELVGGLHCKPAKPLPKEMEGFVQSSGDNGVVVFSLGSMVSNMSEERANVIASALAKIPQKVLWRFDGNKPDTLGLNTQLYKWLPQNDLLGHPKTRAFITHGGANAIYEAIYHGIPMVGVPLFADQLDNIAHMKAKGARVSLDFNTMSSTDLLHALKTVINDPFYKENAMKLSSIHHDQPVKPLDRAVFWIEFVMRHKGAKHLRVAAYDLTWFQYHSLDVIGFLLACVATVIFIITKCLFCVLKFVRTGKKGKRD.

Positions methionine 1–cysteine 23 are cleaved as a signal peptide. Lysine 135 is subject to N6-succinyllysine. N-linked (GlcNAc...) asparagine glycosylation occurs at asparagine 315. Residues valine 493 to phenylalanine 513 traverse the membrane as a helical segment.

It belongs to the UDP-glycosyltransferase family. As to expression, expressed in several tissues, including prostate, testis, mammary gland, kidney, adrenals and intestine.

Its subcellular location is the microsome membrane. It is found in the endoplasmic reticulum membrane. The catalysed reaction is glucuronate acceptor + UDP-alpha-D-glucuronate = acceptor beta-D-glucuronoside + UDP + H(+). In terms of biological role, UDPGTs are of major importance in the conjugation and subsequent elimination of potentially toxic xenobiotics and endogenous compounds. This isozyme has glucuronidating capacity on testosterone, dihydrotestosterone, 5-alpha-androstane-3-alpha,17-beta-diol, androsterone, oestradiol, tetrahydroaldosterone and tetrahydrocortisone. This enzyme is essential to inactivation of several steroids. In Macaca fascicularis (Crab-eating macaque), this protein is UDP-glucuronosyltransferase 2B30 (UGT2B30).